The primary structure comprises 119 residues: DNA-binding protein Maeo_0998 (119 aa).

Basic and acidic residues predominate over residues 1-11 (MDIEEIKRQKM). The interval 1 to 36 (MDIEEIKRQKMMELQQQQAQGAPNPEEIQQQQEQER) is disordered. Positions 15-32 (QQQQAQGAPNPEEIQQQQ) are enriched in low complexity.

It belongs to the PDCD5 family.

This Methanococcus aeolicus (strain ATCC BAA-1280 / DSM 17508 / OCM 812 / Nankai-3) protein is DNA-binding protein Maeo_0998.